A 171-amino-acid chain; its full sequence is Peptidyl-prolyl cis-trans isomerase 7 (171 aa).

Residues Phe-7–Gln-170 form the PPIase cyclophilin-type domain.

Belongs to the cyclophilin-type PPIase family.

It carries out the reaction [protein]-peptidylproline (omega=180) = [protein]-peptidylproline (omega=0). Functionally, PPIases accelerate the folding of proteins. It catalyzes the cis-trans isomerization of proline imidic peptide bonds in oligopeptides. The polypeptide is Peptidyl-prolyl cis-trans isomerase 7 (cyn-7) (Caenorhabditis elegans).